A 1062-amino-acid chain; its full sequence is Inversin (1062 aa).

ANK repeat units lie at residues 13 to 42 (SLAS…ALRD), 47 to 76 (FGRT…DVNK), 80 to 110 (SRRT…WMQK), 113 to 144 (EEMT…EVDT), 148 to 177 (NKQT…NIGI), 181 to 213 (EGKI…TESL), 220 to 250 (EGRT…NITS), 254 to 283 (LFRT…SGTI), 288 to 317 (QGAT…VKDD), 321 to 350 (EGRT…DIDI), 356 to 385 (YGGT…QVDA), 389 to 418 (MKHT…RVDL), 422 to 451 (DGHS…NPNV), 455 to 484 (AGRT…DPNI), 488 to 517 (EGRT…FPNQ), and 523 to 553 (ERYT…SIAA). Asn75 carries the post-translational modification 3-hydroxyasparagine. A D-box 1 motif is present at residues 490 to 498 (RTALHWSCN). Residues 555–584 (QDIAAFKIQAVYKGYKVRKAFRDRKNLLMK) form the IQ 1 domain. A compositionally biased stretch (basic and acidic residues) spans 589-608 (RKDAAAKKREEENKRKEAEQ). A disordered region spans residues 589-849 (RKDAAAKKRE…QDKLIGGVSS (261 aa)). Composition is skewed to polar residues over residues 636-658 (QNEG…TVQS) and 676-689 (QGDS…TASR). Residues 690–700 (KPSETPIEHCR) are compositionally biased toward basic and acidic residues. Residues 713-724 (GGNSSKNQGTSS) are compositionally biased toward polar residues. 2 stretches are compositionally biased toward basic and acidic residues: residues 725-741 (VEKR…RCEE) and 775-788 (DHPR…DRAA). A D-box 2 motif is present at residues 907–915 (RKELFRRKN). The IQ 2 domain occupies 914 to 943 (KNKAAAVIQRAWRSYQLRKHLSRLLHLKQL). Residues 1042-1062 (RSKKFSYNLQPSSQSKNKPKL) form a disordered region. Residues 1046 to 1062 (FSYNLQPSSQSKNKPKL) show a composition bias toward polar residues.

In terms of assembly, interacts with microtubules. Interacts with NPHP1. Interacts with DVL1, PRICKLE (PRICKLE1 or PRICKLE2) and Strabismus (VANGL1 or VANGL2). Binds calmodulin via its IQ domains. Interacts with APC2. Interacts with alpha-, beta-, and gamma-catenin. Interacts with N-cadherin (CDH2). Interacts with NPHP3. Interacts with IQCB1; the interaction likely requires additional interactors. Component of a complex containing at least ANKS6, INVS, NEK8 and NPHP3. ANKS6 may organize complex assembly by linking INVS and NPHP3 to NEK8 and INVS may target the complex to the proximal ciliary axoneme. Post-translationally, may be ubiquitinated via its interaction with APC2. Hydroxylated at Asn-75, most probably by HIF1AN. In terms of tissue distribution, strongly expressed in the primary cilia of renal cells, especially in the varicosities, swellings observed in the cilia. Localizes in the node monocilia and in other 9+0 monocilia, including those of kidney epithelial cells and the pituitary gland, but it does not localize to 9+2 cilia (at protein level). In adult, it is expressed at high level in liver and kidney. Weakly or not expressed in other tissues.

The protein localises to the cytoplasm. It is found in the cytoskeleton. It localises to the membrane. The protein resides in the nucleus. Its subcellular location is the perinuclear region. The protein localises to the spindle. In terms of biological role, required for normal renal development and establishment of left-right axis. Probably acts as a molecular switch between different Wnt signaling pathways. Inhibits the canonical Wnt pathway by targeting cytoplasmic disheveled (DVL1) for degradation by the ubiquitin-proteasome. This suggests that it is required in renal development to oppose the repression of terminal differentiation of tubular epithelial cells by Wnt signaling. Involved in the organization of apical junctions in kidney cells together with NPHP1, NPHP4 and RPGRIP1L/NPHP8. Does not seem to be strictly required for ciliogenesis. This chain is Inversin (Invs), found in Mus musculus (Mouse).